We begin with the raw amino-acid sequence, 159 residues long: Protein-export protein SecB (159 aa).

It belongs to the SecB family. Homotetramer, a dimer of dimers. One homotetramer interacts with 1 SecA dimer.

Its subcellular location is the cytoplasm. One of the proteins required for the normal export of preproteins out of the cell cytoplasm. It is a molecular chaperone that binds to a subset of precursor proteins, maintaining them in a translocation-competent state. It also specifically binds to its receptor SecA. The polypeptide is Protein-export protein SecB (Nitrosospira multiformis (strain ATCC 25196 / NCIMB 11849 / C 71)).